The sequence spans 420 residues: Serine hydroxymethyltransferase (420 aa).

Residues L121 and 125–127 (GHL) contribute to the (6S)-5,6,7,8-tetrahydrofolate site. An N6-(pyridoxal phosphate)lysine modification is found at K230. A (6S)-5,6,7,8-tetrahydrofolate-binding site is contributed by 355 to 357 (SPF).

Belongs to the SHMT family. As to quaternary structure, homodimer. Requires pyridoxal 5'-phosphate as cofactor.

It is found in the cytoplasm. It carries out the reaction (6R)-5,10-methylene-5,6,7,8-tetrahydrofolate + glycine + H2O = (6S)-5,6,7,8-tetrahydrofolate + L-serine. It participates in one-carbon metabolism; tetrahydrofolate interconversion. The protein operates within amino-acid biosynthesis; glycine biosynthesis; glycine from L-serine: step 1/1. Functionally, catalyzes the reversible interconversion of serine and glycine with tetrahydrofolate (THF) serving as the one-carbon carrier. This reaction serves as the major source of one-carbon groups required for the biosynthesis of purines, thymidylate, methionine, and other important biomolecules. Also exhibits THF-independent aldolase activity toward beta-hydroxyamino acids, producing glycine and aldehydes, via a retro-aldol mechanism. The chain is Serine hydroxymethyltransferase from Streptococcus mutans serotype c (strain ATCC 700610 / UA159).